The chain runs to 118 residues: Large ribosomal subunit protein uL22 (118 aa).

It belongs to the universal ribosomal protein uL22 family. In terms of assembly, part of the 50S ribosomal subunit.

This protein binds specifically to 23S rRNA; its binding is stimulated by other ribosomal proteins, e.g. L4, L17, and L20. It is important during the early stages of 50S assembly. It makes multiple contacts with different domains of the 23S rRNA in the assembled 50S subunit and ribosome. In terms of biological role, the globular domain of the protein is located near the polypeptide exit tunnel on the outside of the subunit, while an extended beta-hairpin is found that lines the wall of the exit tunnel in the center of the 70S ribosome. This chain is Large ribosomal subunit protein uL22, found in Levilactobacillus brevis (strain ATCC 367 / BCRC 12310 / CIP 105137 / JCM 1170 / LMG 11437 / NCIMB 947 / NCTC 947) (Lactobacillus brevis).